The following is a 231-amino-acid chain: TATA-box-binding protein (231 aa).

Repeat copies occupy residues Leu58 to Ile134 and Ile148 to Leu225.

Belongs to the TBP family. As to quaternary structure, belongs to the TFIID complex together with the TBP-associated factors (TAFs). Binds DNA as monomer.

The protein localises to the nucleus. Its function is as follows. General transcription factor that functions at the core of the DNA-binding multiprotein factor TFIID. Binding of TFIID to the TATA box is the initial transcriptional step of the pre-initiation complex (PIC), playing a role in the activation of eukaryotic genes transcribed by RNA polymerase II. This chain is TATA-box-binding protein (tbp1), found in Schizosaccharomyces pombe (strain 972 / ATCC 24843) (Fission yeast).